A 252-amino-acid polypeptide reads, in one-letter code: Aspartate/glutamate leucyltransferase (252 aa).

The protein belongs to the R-transferase family. Bpt subfamily.

The protein localises to the cytoplasm. It carries out the reaction N-terminal L-glutamyl-[protein] + L-leucyl-tRNA(Leu) = N-terminal L-leucyl-L-glutamyl-[protein] + tRNA(Leu) + H(+). The catalysed reaction is N-terminal L-aspartyl-[protein] + L-leucyl-tRNA(Leu) = N-terminal L-leucyl-L-aspartyl-[protein] + tRNA(Leu) + H(+). Functions in the N-end rule pathway of protein degradation where it conjugates Leu from its aminoacyl-tRNA to the N-termini of proteins containing an N-terminal aspartate or glutamate. The polypeptide is Aspartate/glutamate leucyltransferase (Polynucleobacter necessarius subsp. necessarius (strain STIR1)).